We begin with the raw amino-acid sequence, 628 residues long: Phosphomethylpyrimidine synthase (628 aa).

The disordered stretch occupies residues 1-22 (MSKQEKTINLSESAQVDQQSVQ). The segment covering 7–22 (TINLSESAQVDQQSVQ) has biased composition (polar residues). Substrate contacts are provided by residues Asn-232, Met-261, Tyr-290, His-326, 346-348 (SRG), 387-390 (DGLR), and Glu-426. Position 430 (His-430) interacts with Zn(2+). Residue Tyr-453 coordinates substrate. Residue His-494 participates in Zn(2+) binding. 3 residues coordinate [4Fe-4S] cluster: Cys-574, Cys-577, and Cys-582.

It belongs to the ThiC family. Homodimer. [4Fe-4S] cluster serves as cofactor.

The catalysed reaction is 5-amino-1-(5-phospho-beta-D-ribosyl)imidazole + S-adenosyl-L-methionine = 4-amino-2-methyl-5-(phosphooxymethyl)pyrimidine + CO + 5'-deoxyadenosine + formate + L-methionine + 3 H(+). It participates in cofactor biosynthesis; thiamine diphosphate biosynthesis. In terms of biological role, catalyzes the synthesis of the hydroxymethylpyrimidine phosphate (HMP-P) moiety of thiamine from aminoimidazole ribotide (AIR) in a radical S-adenosyl-L-methionine (SAM)-dependent reaction. In Pseudomonas putida (strain W619), this protein is Phosphomethylpyrimidine synthase.